A 358-amino-acid chain; its full sequence is Fructose-bisphosphate aldolase 6, cytosolic (358 aa).

Ser-2 is subject to N-acetylserine. Arg-39 lines the substrate pocket. Cys-68 bears the S-glutathionyl cysteine; transient mark. Residue Cys-173 is modified to S-glutathionyl cysteine; transient; alternate. Cys-173 carries the post-translational modification S-nitrosocysteine; transient; alternate. Glu-183 serves as the catalytic Proton acceptor. Lys-225 functions as the Schiff-base intermediate with dihydroxyacetone-P in the catalytic mechanism. Substrate-binding positions include 266–268 (SGG) and Arg-298. Residue Ser-350 is modified to Phosphoserine. Lys-354 is modified (N6,N6,N6-trimethyllysine).

The protein belongs to the class I fructose-bisphosphate aldolase family. Homotetramer. Interacts with TRX1 and TRX3. Interacts with GAPC1 and VDAC3. S-glutathionylated at Cys-68 and Cys-173. In terms of processing, S-nitrosylated at Cys-173. As to expression, expressed in roots, rosettes leaves, cauline leaves, stems and flowers.

It is found in the cytoplasm. It localises to the cytosol. Its subcellular location is the nucleus. The protein resides in the mitochondrion. The enzyme catalyses beta-D-fructose 1,6-bisphosphate = D-glyceraldehyde 3-phosphate + dihydroxyacetone phosphate. It functions in the pathway carbohydrate degradation; glycolysis; D-glyceraldehyde 3-phosphate and glycerone phosphate from D-glucose: step 4/4. With respect to regulation, total and irreversible inhibition by S-nitrosoglutathione (GSNO). Partial and reversible inhibition by oxidized glutathione (GSSG). Fructose-bisphosphate aldolase that plays a key role in glycolysis and gluconeogenesis. Associates with GAPC1 to the outer mitochondrial membrane, in a redox-dependent manner, leading to binding and bundling of actin. Actin binding and bundling occurs under oxidizing conditions and is reversible under reducing conditions. May be part of a redox-dependent retrograde signal transduction network for adaptation upon oxidative stress. The chain is Fructose-bisphosphate aldolase 6, cytosolic from Arabidopsis thaliana (Mouse-ear cress).